The sequence spans 505 residues: MSEQHAQGADAVTDLNNELKTRREKLASLREQGIPFPNDFRRDHTSDQLHADFDAKENEELEALNIEVSVAGRMMTRRIMGKASFVTLQDVGGRIQLYVARDDLPEGVYNEQFKKWDLGDILGAKGKLFKTKTGELSIHCTELRLLTKALRPLPDKFHGLQDQEARYRQRYLDLISNDESRNTFKVRSQIMAGIRQFMVGRGFMEVETPMMQVIPGGAAARPFITHHNALDLDMYLRIAPELYLKRLVVGGFERVFEINRNFRNEGISVRHNPEFTMMELYMAYADYKDLIELTESLFRTLAQDILGKTEVPYGDEVFDFGKPFEKLTMREAIKKYRPETDMADLDNFDSAKAIAESIGIKVEKSWGLGRIVTEIFEEVAEAHLIQPTFITEYPAEVSPLARRNDVNPEITDRFEFFIGGREIGNGFSELNDAEDQAQRFQDQVNAKEAGDDEAMFYDEDYVTALEHGLPPTAGLGIGIDRMVMLFTNSHTIRDVILFPAMRPVK.

The Mg(2+) site is built by Glu-415 and Glu-422.

Belongs to the class-II aminoacyl-tRNA synthetase family. Homodimer. Mg(2+) is required as a cofactor.

The protein resides in the cytoplasm. It catalyses the reaction tRNA(Lys) + L-lysine + ATP = L-lysyl-tRNA(Lys) + AMP + diphosphate. In Citrobacter koseri (strain ATCC BAA-895 / CDC 4225-83 / SGSC4696), this protein is Lysine--tRNA ligase.